The chain runs to 410 residues: 3-phosphoshikimate 1-carboxyvinyltransferase (410 aa).

3-phosphoshikimate is bound by residues Lys-21, Ser-22, and Arg-26. Lys-21 provides a ligand contact to phosphoenolpyruvate. Residues Gly-69 and Arg-97 each contribute to the phosphoenolpyruvate site. Residues Ser-143, Ser-144, Gln-145, Ser-171, Asp-288, and Lys-315 each contribute to the 3-phosphoshikimate site. Gln-145 lines the phosphoenolpyruvate pocket. Residue Asp-288 is the Proton acceptor of the active site. 3 residues coordinate phosphoenolpyruvate: Arg-319, Arg-364, and Lys-389.

This sequence belongs to the EPSP synthase family. Monomer.

Its subcellular location is the cytoplasm. It catalyses the reaction 3-phosphoshikimate + phosphoenolpyruvate = 5-O-(1-carboxyvinyl)-3-phosphoshikimate + phosphate. Its pathway is metabolic intermediate biosynthesis; chorismate biosynthesis; chorismate from D-erythrose 4-phosphate and phosphoenolpyruvate: step 6/7. Functionally, catalyzes the transfer of the enolpyruvyl moiety of phosphoenolpyruvate (PEP) to the 5-hydroxyl of shikimate-3-phosphate (S3P) to produce enolpyruvyl shikimate-3-phosphate and inorganic phosphate. This is 3-phosphoshikimate 1-carboxyvinyltransferase from Bacteroides fragilis (strain ATCC 25285 / DSM 2151 / CCUG 4856 / JCM 11019 / LMG 10263 / NCTC 9343 / Onslow / VPI 2553 / EN-2).